A 319-amino-acid chain; its full sequence is Transaldolase (319 aa).

Residue lysine 132 is the Schiff-base intermediate with substrate of the active site.

The protein belongs to the transaldolase family. Type 1 subfamily. As to quaternary structure, homodimer.

The protein resides in the cytoplasm. The catalysed reaction is D-sedoheptulose 7-phosphate + D-glyceraldehyde 3-phosphate = D-erythrose 4-phosphate + beta-D-fructose 6-phosphate. It participates in carbohydrate degradation; pentose phosphate pathway; D-glyceraldehyde 3-phosphate and beta-D-fructose 6-phosphate from D-ribose 5-phosphate and D-xylulose 5-phosphate (non-oxidative stage): step 2/3. Functionally, transaldolase is important for the balance of metabolites in the pentose-phosphate pathway. The polypeptide is Transaldolase (Alteromonas mediterranea (strain DSM 17117 / CIP 110805 / LMG 28347 / Deep ecotype)).